The primary structure comprises 493 residues: Galactose-1-phosphate uridylyltransferase (493 aa).

It belongs to the galactose-1-phosphate uridylyltransferase type 2 family.

It is found in the cytoplasm. It catalyses the reaction alpha-D-galactose 1-phosphate + UDP-alpha-D-glucose = alpha-D-glucose 1-phosphate + UDP-alpha-D-galactose. It participates in carbohydrate metabolism; galactose metabolism. The protein is Galactose-1-phosphate uridylyltransferase (galT) of Lactococcus lactis subsp. lactis (strain IL1403) (Streptococcus lactis).